A 116-amino-acid chain; its full sequence is Large ribosomal subunit protein bL20c (116 aa).

It belongs to the bacterial ribosomal protein bL20 family.

It localises to the plastid. The protein resides in the chloroplast. Binds directly to 23S ribosomal RNA and is necessary for the in vitro assembly process of the 50S ribosomal subunit. It is not involved in the protein synthesizing functions of that subunit. The protein is Large ribosomal subunit protein bL20c of Cryptomeria japonica (Japanese cedar).